Consider the following 116-residue polypeptide: U16-barytoxin-Tl1c (116 aa).

Residues methionine 1–alanine 20 form the signal peptide. Positions asparagine 21–asparagine 76 are excised as a propeptide. Cystine bridges form between cysteine 75–cysteine 90, cysteine 82–cysteine 95, and cysteine 89–cysteine 110.

This sequence belongs to the neurotoxin 14 (magi-1) family. 06 (ICK-Trit) subfamily. As to expression, expressed by the venom gland.

The protein resides in the secreted. Functionally, ion channel inhibitor. This chain is U16-barytoxin-Tl1c, found in Trittame loki (Brush-footed trapdoor spider).